The sequence spans 199 residues: Recombination protein RecR (199 aa).

The C4-type zinc-finger motif lies at 58–73; sequence CRICYNITDTEVCNIC. Residues 81 to 176 enclose the Toprim domain; it reads SLICVVSHPM…KVTRIAHGVP (96 aa).

Belongs to the RecR family.

In terms of biological role, may play a role in DNA repair. It seems to be involved in an RecBC-independent recombinational process of DNA repair. It may act with RecF and RecO. In Thermoanaerobacter pseudethanolicus (strain ATCC 33223 / 39E) (Clostridium thermohydrosulfuricum), this protein is Recombination protein RecR.